We begin with the raw amino-acid sequence, 246 residues long: Large ribosomal subunit protein uL3 (246 aa).

Residue Gln-151 is modified to N5-methylglutamine.

It belongs to the universal ribosomal protein uL3 family. In terms of assembly, part of the 50S ribosomal subunit. Forms a cluster with proteins L14 and L19. Post-translationally, methylated by PrmB.

One of the primary rRNA binding proteins, it binds directly near the 3'-end of the 23S rRNA, where it nucleates assembly of the 50S subunit. This Bartonella quintana (strain Toulouse) (Rochalimaea quintana) protein is Large ribosomal subunit protein uL3.